The sequence spans 181 residues: Dual-action ribosomal maturation protein DarP (181 aa).

The interval 1 to 24 (MTGIKRPMSQYQDDNEWEDWGPSK) is disordered.

It belongs to the DarP family.

It localises to the cytoplasm. Its function is as follows. Member of a network of 50S ribosomal subunit biogenesis factors which assembles along the 30S-50S interface, preventing incorrect 23S rRNA structures from forming. Promotes peptidyl transferase center (PTC) maturation. The protein is Dual-action ribosomal maturation protein DarP of Aeromonas hydrophila subsp. hydrophila (strain ATCC 7966 / DSM 30187 / BCRC 13018 / CCUG 14551 / JCM 1027 / KCTC 2358 / NCIMB 9240 / NCTC 8049).